The following is a 300-amino-acid chain: Protein ARMCX6 (300 aa).

Over 1 to 6 (MGRARE) the chain is Mitochondrial intermembrane. Mitochondrion outer membrane (MOM)-targeting sequence stretches follow at residues 1–6 (MGRARE) and 26–36 (KLTIGRDDSEK). Residues 7–27 (VGWMAAGLMIGAGACYCVYKL) form a helical; Signal-anchor membrane-spanning segment. Over 28–300 (TIGRDDSEKL…REILLETPAP (273 aa)) the chain is Cytoplasmic. Disordered regions lie at residues 35–54 (EKLE…LDEE) and 69–99 (WTED…RAHP).

It belongs to the eutherian X-chromosome-specific Armcx family.

It localises to the mitochondrion. Its subcellular location is the mitochondrion outer membrane. May regulate the dynamics and distribution of mitochondria in neural cells. This is Protein ARMCX6 (ARMCX6) from Homo sapiens (Human).